The following is a 557-amino-acid chain: Aerobic glycerol-3-phosphate dehydrogenase (557 aa).

21–49 lines the FAD pocket; the sequence is DVVIVGGGITGAGIALDASNRGMKVALVE.

The protein belongs to the FAD-dependent glycerol-3-phosphate dehydrogenase family. Requires FAD as cofactor.

Its subcellular location is the cytoplasm. It catalyses the reaction a quinone + sn-glycerol 3-phosphate = dihydroxyacetone phosphate + a quinol. The protein operates within polyol metabolism; glycerol degradation via glycerol kinase pathway; glycerone phosphate from sn-glycerol 3-phosphate (aerobic route): step 1/1. This is Aerobic glycerol-3-phosphate dehydrogenase (glpD) from Staphylococcus epidermidis (strain ATCC 35984 / DSM 28319 / BCRC 17069 / CCUG 31568 / BM 3577 / RP62A).